The chain runs to 563 residues: Delta-1-pyrroline-5-carboxylate dehydrogenase, mitochondrial (563 aa).

Residues 1 to 24 constitute a mitochondrion transit peptide; the sequence is MLLRSAALCRALLARRGRAAGLCR. A Phosphoserine modification is found at S44. N6-acetyllysine is present on K52. K93, K99, K114, K130, and K175 each carry N6-acetyllysine; alternate. 5 positions are modified to N6-succinyllysine; alternate: K93, K99, K114, K130, and K175. Residues S208, K233, and 286–290 each bind NAD(+); that span reads GSVPT. E314 (proton acceptor) is an active-site residue. An N6-acetyllysine modification is found at K318. Position 347 is an N6-succinyllysine (K347). The Nucleophile role is filled by C348. 2 positions are modified to N6-acetyllysine: K365 and K376. Position 395 is an N6-succinyllysine (K395). E447 provides a ligand contact to NAD(+). K509 carries the N6-acetyllysine; alternate modification. An N6-succinyllysine; alternate modification is found at K509. S513 lines the substrate pocket. The residue at position 531 (K531) is an N6-acetyllysine.

This sequence belongs to the aldehyde dehydrogenase family. In terms of assembly, homodimer.

It is found in the mitochondrion matrix. The catalysed reaction is L-glutamate 5-semialdehyde + NAD(+) + H2O = L-glutamate + NADH + 2 H(+). It functions in the pathway amino-acid degradation; L-proline degradation into L-glutamate; L-glutamate from L-proline: step 2/2. Its function is as follows. Irreversible conversion of delta-1-pyrroline-5-carboxylate (P5C), derived either from proline or ornithine, to glutamate. This is a necessary step in the pathway interconnecting the urea and tricarboxylic acid cycles. The preferred substrate is glutamic gamma-semialdehyde, other substrates include succinic, glutaric and adipic semialdehydes. The polypeptide is Delta-1-pyrroline-5-carboxylate dehydrogenase, mitochondrial (ALDH4A1) (Bos taurus (Bovine)).